The chain runs to 327 residues: Aspartate carbamoyltransferase catalytic subunit (327 aa).

Residues Arg67 and Thr68 each coordinate carbamoyl phosphate. Position 95 (Lys95) interacts with L-aspartate. Residues Arg117, His145, and Gln148 each coordinate carbamoyl phosphate. Arg178 and Arg232 together coordinate L-aspartate. 2 residues coordinate carbamoyl phosphate: Gly273 and Pro274.

The protein belongs to the aspartate/ornithine carbamoyltransferase superfamily. ATCase family. Heterododecamer (2C3:3R2) of six catalytic PyrB chains organized as two trimers (C3), and six regulatory PyrI chains organized as three dimers (R2).

It carries out the reaction carbamoyl phosphate + L-aspartate = N-carbamoyl-L-aspartate + phosphate + H(+). It participates in pyrimidine metabolism; UMP biosynthesis via de novo pathway; (S)-dihydroorotate from bicarbonate: step 2/3. Its function is as follows. Catalyzes the condensation of carbamoyl phosphate and aspartate to form carbamoyl aspartate and inorganic phosphate, the committed step in the de novo pyrimidine nucleotide biosynthesis pathway. The sequence is that of Aspartate carbamoyltransferase catalytic subunit from Parvibaculum lavamentivorans (strain DS-1 / DSM 13023 / NCIMB 13966).